Consider the following 84-residue polypeptide: Metallothionein type 2b (84 aa).

It belongs to the metallothionein superfamily. Type 15 family. In terms of tissue distribution, expressed in leaves, stems and roots.

It localises to the cytoplasm. The protein resides in the nucleus. Functionally, metallothioneins have a high content of cysteine residues that bind various heavy metals. Probably involved in maintaining homeostasis of essential transition metals and detoxification of toxic metals. Increases cadmium and zinc tolerance when expressed in heterologous systems. Metal chelator binding 6 cadmium or 5 zinc atoms per protein. The sequence is that of Metallothionein type 2b from Colocasia esculenta (Wild taro).